The primary structure comprises 668 residues: MAETGAPLIRLRGVGREYPSGEGVLRVLTDIDLDIGQGEFVAVMGASGSGKSTLMNILGCLDRPSSGSYRMDGREVARLGAGELAALRRETFGFIFQRYHLLSEMTALGNVEVPAIYRGLPADARRARARDLLERLGLGDRTGHRPGQLSGGQQQRVSIARALVNDARVILADEPTGALDSRSGDEVLGILERLNAEGRTVVIVTHDPRVAARAHRVVEIADGRIVADRRTGAPAADPGPGPAQAPQPAPQPAPVQAPVQARVQARAAVPVLGRLAEALRMALLSMRAHKLRSFLTMLGIIIGIASVVSVVALGEGSRRQVLQNIAGLGTNTLQIFPGRDFGDMRSGRVTTLVTADAAALARQPHVASVSPTVGTSATLRHGATEASAQISGVGEQYFDVAGVALTQGRGFDEADVAAMGQNVVIDENTRTSLFGDGPALGQVFMAGKVPLRVIGVAEAQNRGPGGSTSLTVYAPYTTVQARYLGSTSVSGLTLRVADDVDMALAEQMVADILTRRHGTRDFFIVNNDQIRQTITSTTQTLALLIAAIAVISLVVGGIGVMNIMLVSVTERIGEIGLRMAVGARRGDIRAQFLIEAVLVCVIGGIAGILAALGFGLAFERMSSDFTLVYSPLSMLAALASACAIGLAFGYLPAVNAAKLDPVKALQKG.

The ABC transporter domain occupies 9–247; it reads IRLRGVGREY…PGPGPAQAPQ (239 aa). ATP is bound at residue 45-52; the sequence is GASGSGKS. The disordered stretch occupies residues 230 to 257; sequence RTGAPAADPGPGPAQAPQPAPQPAPVQA. Over residues 237-255 the composition is skewed to pro residues; that stretch reads DPGPGPAQAPQPAPQPAPV. A run of 4 helical transmembrane segments spans residues 294 to 314, 541 to 561, 598 to 618, and 634 to 654; these read FLTM…VALG, LALL…IGVM, LVCV…GLAF, and MLAA…LPAV.

This sequence belongs to the ABC transporter superfamily. Macrolide exporter (TC 3.A.1.122) family. Homodimer.

It localises to the cell inner membrane. Functionally, non-canonical ABC transporter that contains transmembrane domains (TMD), which form a pore in the inner membrane, and an ATP-binding domain (NBD), which is responsible for energy generation. Confers resistance against macrolides. This chain is Macrolide export ATP-binding/permease protein MacB 1/2, found in Paracoccus denitrificans (strain Pd 1222).